Consider the following 878-residue polypeptide: uncharacterized protein (878 aa).

4 disordered regions span residues 58–223, 306–494, 585–652, and 679–709; these read IGVD…RTKF, KGRL…TSSR, KLLE…SGKL, and PSSMVTIPSPSSSCSSTSSIIGSSSSSGGGG. Low complexity-rich tracts occupy residues 64–213, 314–325, and 335–355; these read NGNS…SGTS, SNSSQSSDSDYS, and IPNSTLSSSSTLPIPSNPNSN. The segment covering 362–372 has biased composition (polar residues); the sequence is RNPNQLSSTNV. Low complexity predominate over residues 373–494; that stretch reads NNNINNSGGS…TPTTPVTSSR (122 aa). A compositionally biased stretch (basic and acidic residues) spans 585–595; the sequence is KLLEQQKEQQQ. Positions 596-605 are enriched in low complexity; the sequence is KEQQQQQKQQ. Over residues 615-624 the composition is skewed to acidic residues; that stretch reads TDDEDEDDDE. Low complexity-rich tracts occupy residues 639–652 and 679–704; these read NLSNNSSNKGSGKL and PSSMVTIPSPSSSCSSTSSIIGSSSS.

This is an uncharacterized protein from Dictyostelium discoideum (Social amoeba).